The sequence spans 122 residues: Large ribosomal subunit protein uL14 (122 aa).

This sequence belongs to the universal ribosomal protein uL14 family. In terms of assembly, part of the 50S ribosomal subunit. Forms a cluster with proteins L3 and L19. In the 70S ribosome, L14 and L19 interact and together make contacts with the 16S rRNA in bridges B5 and B8.

Its function is as follows. Binds to 23S rRNA. Forms part of two intersubunit bridges in the 70S ribosome. The protein is Large ribosomal subunit protein uL14 of Chlorobium phaeovibrioides (strain DSM 265 / 1930) (Prosthecochloris vibrioformis (strain DSM 265)).